A 689-amino-acid chain; its full sequence is MTHQYLIEIGLEDMPAHVVTPSLQQFHDKTVAFLKENHLDHGAIDQYATPRRLALLIHDLADKQADVEEDVKGPAKKIAQDADGNWTKAAIGFSRGQGMTPDDIVFKTIKGVDYVYLHKAIKGKTAAAILPGMLDVIKSLTFPTRMKWGAYDFEYIRPIHWLVSLLDDAIVPMKLLDVDAGRTTQGHRFLGRPVTLGNAADYVAALKAQFVIVEPAARKQLISDQIHQIAADHQWQIDLDADLLEEVNNLVEWPTAFAGNFDEKYLKIPEAVLITSMKDNQRYFYARDASGKMVNAFIGVRNGNADHLANVIAGNEKVLTARLEDAAFFYAEDQKRSIADDVDRLKAVSFHDKISSMYDKMARTRVIADLLADRFGLSATDKADLDRAASIYKFDLVTSMVGEFPELQGIMGEHYAQLAGEKPAVAQAIAEHYEPISADGALPESLVGTVLAIADKFDSLMSFFAVDLIPSGSNDPYALRRQAYGIVRMIAKHDWPFAVAELQTTIADALKAAGKTNNLDFAAHQQDLNAFMIDRAKQVLQGQKIRHDIVDAVTVRADADLAGILDAAKILSAHADDTDFKPVMEALGRVLRITKKQQVKVDVDTAKFENPSEGQLYDATVATAKKFDDEPTEADYQALKALADPINAYFDATMVMADDQAIRQNRLAALLQLAALIKQFGDVSQVIVK.

This sequence belongs to the class-II aminoacyl-tRNA synthetase family. Tetramer of two alpha and two beta subunits.

The protein resides in the cytoplasm. The catalysed reaction is tRNA(Gly) + glycine + ATP = glycyl-tRNA(Gly) + AMP + diphosphate. The protein is Glycine--tRNA ligase beta subunit of Lacticaseibacillus casei (strain BL23) (Lactobacillus casei).